A 318-amino-acid chain; its full sequence is Aspartate carbamoyltransferase catalytic subunit (318 aa).

Positions 59 and 60 each coordinate carbamoyl phosphate. Residue lysine 87 participates in L-aspartate binding. The carbamoyl phosphate site is built by arginine 109, histidine 137, and glutamine 140. Residues arginine 170 and arginine 224 each coordinate L-aspartate. Glycine 265 and proline 266 together coordinate carbamoyl phosphate.

It belongs to the aspartate/ornithine carbamoyltransferase superfamily. ATCase family. Heterododecamer (2C3:3R2) of six catalytic PyrB chains organized as two trimers (C3), and six regulatory PyrI chains organized as three dimers (R2).

The catalysed reaction is carbamoyl phosphate + L-aspartate = N-carbamoyl-L-aspartate + phosphate + H(+). The protein operates within pyrimidine metabolism; UMP biosynthesis via de novo pathway; (S)-dihydroorotate from bicarbonate: step 2/3. In terms of biological role, catalyzes the condensation of carbamoyl phosphate and aspartate to form carbamoyl aspartate and inorganic phosphate, the committed step in the de novo pyrimidine nucleotide biosynthesis pathway. The chain is Aspartate carbamoyltransferase catalytic subunit from Rhizobium etli (strain ATCC 51251 / DSM 11541 / JCM 21823 / NBRC 15573 / CFN 42).